The following is a 146-amino-acid chain: Ribosome maturation factor RimP (146 aa).

This sequence belongs to the RimP family.

It is found in the cytoplasm. Required for maturation of 30S ribosomal subunits. In Helicobacter pylori (strain HPAG1), this protein is Ribosome maturation factor RimP.